A 102-amino-acid chain; its full sequence is Large ribosomal subunit protein bL21 (102 aa).

The protein belongs to the bacterial ribosomal protein bL21 family. As to quaternary structure, part of the 50S ribosomal subunit. Contacts protein L20.

Its function is as follows. This protein binds to 23S rRNA in the presence of protein L20. In Bacillus pumilus (strain SAFR-032), this protein is Large ribosomal subunit protein bL21.